Consider the following 61-residue polypeptide: Small ribosomal subunit protein uS14 (61 aa).

C24, C27, C40, and C43 together coordinate Zn(2+).

Belongs to the universal ribosomal protein uS14 family. Zinc-binding uS14 subfamily. In terms of assembly, part of the 30S ribosomal subunit. Contacts proteins S3 and S10. The cofactor is Zn(2+).

Binds 16S rRNA, required for the assembly of 30S particles and may also be responsible for determining the conformation of the 16S rRNA at the A site. This is Small ribosomal subunit protein uS14 from Rubrobacter xylanophilus (strain DSM 9941 / JCM 11954 / NBRC 16129 / PRD-1).